Here is a 287-residue protein sequence, read N- to C-terminus: GDT1-like protein C17G8.08c (287 aa).

A run of 7 helical transmembrane segments spans residues 7 to 27 (WAII…GEGM), 50 to 70 (LIFS…FIVA), 89 to 109 (ALFI…LLFP), 112 to 132 (LTDI…LMEA), 194 to 214 (VMAT…FVSE), 232 to 252 (VYGV…LAVI), and 267 to 287 (MFIG…QGFF).

The protein belongs to the GDT1 family.

It localises to the membrane. The chain is GDT1-like protein C17G8.08c from Schizosaccharomyces pombe (strain 972 / ATCC 24843) (Fission yeast).